The primary structure comprises 546 residues: Probable malate:quinone oxidoreductase (546 aa).

It belongs to the MQO family. Requires FAD as cofactor.

It catalyses the reaction (S)-malate + a quinone = a quinol + oxaloacetate. Its pathway is carbohydrate metabolism; tricarboxylic acid cycle; oxaloacetate from (S)-malate (quinone route): step 1/1. The protein is Probable malate:quinone oxidoreductase of Acinetobacter baumannii (strain ACICU).